Here is a 192-residue protein sequence, read N- to C-terminus: LexA repressor (192 aa).

The segment at residues 15–35 is a DNA-binding region (H-T-H motif); it reads RAEIARELGFRSANAAEEHLK. Catalysis depends on for autocatalytic cleavage activity residues Ser109 and Lys146.

It belongs to the peptidase S24 family. In terms of assembly, homodimer.

The catalysed reaction is Hydrolysis of Ala-|-Gly bond in repressor LexA.. In terms of biological role, represses a number of genes involved in the response to DNA damage (SOS response), including recA and lexA. In the presence of single-stranded DNA, RecA interacts with LexA causing an autocatalytic cleavage which disrupts the DNA-binding part of LexA, leading to derepression of the SOS regulon and eventually DNA repair. The protein is LexA repressor of Photobacterium profundum (strain SS9).